Reading from the N-terminus, the 143-residue chain is Hypoxic response protein 1 (143 aa).

2 CBS domains span residues 8-65 (MNAG…GLDP) and 73-131 (LARD…IVQF). Cysteine 14 and cysteine 39 form a disulfide bridge. The Zn(2+) site is built by histidine 97 and histidine 122.

In terms of assembly, homodimer.

It is found in the secreted. Functionally, unlike some other CBS-domain containing proteins does not seem to bind AMP. The polypeptide is Hypoxic response protein 1 (hrp1) (Mycobacterium tuberculosis (strain CDC 1551 / Oshkosh)).